A 498-amino-acid polypeptide reads, in one-letter code: GTPase Der (498 aa).

EngA-type G domains follow at residues P3 to L167 and I210 to T383. Residues G9–S16, D57–I61, N119–D122, G216–S223, D263–V267, and N328–D331 contribute to the GTP site. A KH-like domain is found at T384–D468.

This sequence belongs to the TRAFAC class TrmE-Era-EngA-EngB-Septin-like GTPase superfamily. EngA (Der) GTPase family. Associates with the 50S ribosomal subunit.

Functionally, GTPase that plays an essential role in the late steps of ribosome biogenesis. In Vibrio campbellii (strain ATCC BAA-1116), this protein is GTPase Der.